Reading from the N-terminus, the 371-residue chain is Protein NDRG2 (371 aa).

Positions 1-22 (MAELQEVQITEEKPLLPGQTPE) are disordered. The residue at position 2 (Ala-2) is an N-acetylalanine. Thr-20 is modified (phosphothreonine). Phosphoserine occurs at positions 326 and 328. Thr-330 is subject to Phosphothreonine. Residue Ser-332 is modified to Phosphoserine. Position 334 is a phosphothreonine (Thr-334). Positions 334–371 (TSAASIDGSRSRSRTLSQSSESGTLPSGPPGHTMEVSC) are disordered. Ser-335, Ser-338, and Ser-344 each carry phosphoserine. Thr-348 is modified (phosphothreonine). Residues Ser-350, Ser-352, Ser-353, and Ser-355 each carry the phosphoserine modification. Position 357 is a phosphothreonine (Thr-357). Ser-370 carries the post-translational modification Phosphoserine.

This sequence belongs to the NDRG family. Broadly expressed, with highest levels in heart, liver, skeletal muscle and aorta.

It localises to the cytoplasm. Its subcellular location is the perinuclear region. It is found in the cell projection. The protein resides in the growth cone. In terms of biological role, contributes to the regulation of the Wnt signaling pathway. Down-regulates CTNNB1-mediated transcriptional activation of target genes, such as CCND1, and may thereby act as tumor suppressor. May be involved in dendritic cell and neuron differentiation. The chain is Protein NDRG2 (Ndrg2) from Rattus norvegicus (Rat).